The sequence spans 308 residues: MVFKMSEMDIIKETYEKIKNMEIRGAGRIGRAAAKALKEYALKISHLNEEEFKNKMREAGNILISARPTAVSLPNVVKYVLKGLNEENPKERVIERADEFINSSLKAIENIGKFGANRIKDGDTILTHCNSEAAISVIKTAYDEGKDIKVFCTETRPRNQGYLTAKTLYDYGIDVTLIVDSAVRYFIKEIDIVVVGADAITANGCLVNKIGTSQIALIANESRVPFLTAAETYKFHPKTIVGELIEIEERSPEEVAVFEDKYKGIKIRNPAFDVTPAKYIDAIITEVGLIPPQGAWYIIEKYFGWLEK.

Substrate-binding positions include Arg24–Gly27 and Arg67. The active-site Proton acceptor is Cys129. Asp198 (proton donor) is an active-site residue. Residues Asn208–Lys209 and Lys234 each bind substrate.

The protein belongs to the eIF-2B alpha/beta/delta subunits family. R15P isomerase subfamily.

It carries out the reaction alpha-D-ribose 1,5-bisphosphate = D-ribulose 1,5-bisphosphate. Catalyzes the isomerization of ribose 1,5-bisphosphate (R15P) to ribulose 1,5-bisphosphate (RuBP), the CO(2) acceptor and substrate for RubisCO. Functions in an archaeal AMP degradation pathway, together with AMP phosphorylase and RubisCO. This chain is Ribose 1,5-bisphosphate isomerase, found in Methanocaldococcus jannaschii (strain ATCC 43067 / DSM 2661 / JAL-1 / JCM 10045 / NBRC 100440) (Methanococcus jannaschii).